The chain runs to 430 residues: MTGLVMMTKGGGCGGGGKGGRRKSTAEEEEEEEQNQQQLSLVEFLLTALRKSVVSCRVDNRQDDGGVGGGISSAVHHMEIGWPTNVRHITHVTFDRFHGFLGLPHELQVEIPCRVPSASVSVFGVSAESMQCSYDEKGNSVPTILLLMQERLYSQQGLKAEGIFRINPENSQEEHVRDQLNRGIVPENIDVHCLAGLIKAWFRELPSGVLDGLSPEEVLNCNTEDESVELIKQLKPTESALLNWAVDLMADVVEEEESNKMNARNIAMVFAPNMTQMTDPLTALMHAVQVMNLLKTLITKTLAEREENATGSEGYSPSHSSNSQTDSDSDNAQDMEVSCESQATDSECGEEEEVEEVEQHQEHLSRHSTHEDETDIGSLCSIEKCFLNQLNNNAARVSNTSISEDWSPKAFPLVSFTENKSNTLSSSTSD.

Residues 1 to 36 (MTGLVMMTKGGGCGGGGKGGRRKSTAEEEEEEEQNQ) form a disordered region. Residues 9-18 (KGGGCGGGGK) are compositionally biased toward gly residues. In terms of domain architecture, CRIB spans 80 to 93 (IGWPTNVRHITHVT). In terms of domain architecture, Rho-GAP spans 125–310 (VSAESMQCSY…TLAEREENAT (186 aa)). Residues 307–372 (ENATGSEGYS…HLSRHSTHED (66 aa)) form a disordered region. The span at 316–326 (SPSHSSNSQTD) shows a compositional bias: low complexity. Positions 347 to 356 (ECGEEEEVEE) are enriched in acidic residues. Basic and acidic residues predominate over residues 357-371 (VEQHQEHLSRHSTHE).

In terms of assembly, homodimerizes via its Rho-GAP domain and forms a tetrameric complex (2:2) with ARAC1/ROP3, ARAC2/ROP7, ARAC4/ROP2, ARAC5/ROP4, ARAC7/ROP9 or ARAC11/ROP1.

Its function is as follows. Acts as a GTPase activator for the Rac-type GTPase by converting it to an inactive GDP-bound state. The polypeptide is Rho GTPase-activating protein 2 (ROPGAP2) (Arabidopsis thaliana (Mouse-ear cress)).